The primary structure comprises 593 residues: Auxin response factor 12 (593 aa).

The TF-B3 DNA-binding region spans 126 to 228 (FTKVLTASDT…ELRVGIRRAR (103 aa)). The PB1 domain maps to 511–592 (RTCTKVQMQG…MVKKIFIQKR (82 aa)).

The protein belongs to the ARF family. Homodimers and heterodimers.

It is found in the nucleus. Functionally, auxin response factors (ARFs) are transcriptional factors that bind specifically to the DNA sequence 5'-TGTCTC-3' found in the auxin-responsive promoter elements (AuxREs). Could act as transcriptional activator or repressor. Formation of heterodimers with Aux/IAA proteins may alter their ability to modulate early auxin response genes expression. This Arabidopsis thaliana (Mouse-ear cress) protein is Auxin response factor 12 (ARF12).